Reading from the N-terminus, the 145-residue chain is 3-hydroxyacyl-[acyl-carrier-protein] dehydratase FabZ (145 aa).

His51 is a catalytic residue.

Belongs to the thioester dehydratase family. FabZ subfamily.

It is found in the cytoplasm. It catalyses the reaction a (3R)-hydroxyacyl-[ACP] = a (2E)-enoyl-[ACP] + H2O. Its function is as follows. Involved in unsaturated fatty acids biosynthesis. Catalyzes the dehydration of short chain beta-hydroxyacyl-ACPs and long chain saturated and unsaturated beta-hydroxyacyl-ACPs. This chain is 3-hydroxyacyl-[acyl-carrier-protein] dehydratase FabZ, found in Staphylococcus epidermidis (strain ATCC 35984 / DSM 28319 / BCRC 17069 / CCUG 31568 / BM 3577 / RP62A).